Here is a 447-residue protein sequence, read N- to C-terminus: Tubulin beta-2 chain (447 aa).

8 residues coordinate GTP: glutamine 11, glutamate 69, serine 138, glycine 142, threonine 143, glycine 144, asparagine 204, and asparagine 226. A Mg(2+)-binding site is contributed by glutamate 69. Polar residues predominate over residues 419 to 428 (VSEYQQYQDA). The disordered stretch occupies residues 419–447 (VSEYQQYQDATSDEEGEYEDEDQEPEEDM). The span at 429–447 (TSDEEGEYEDEDQEPEEDM) shows a compositional bias: acidic residues.

The protein belongs to the tubulin family. As to quaternary structure, dimer of alpha and beta chains. A typical microtubule is a hollow water-filled tube with an outer diameter of 25 nm and an inner diameter of 15 nM. Alpha-beta heterodimers associate head-to-tail to form protofilaments running lengthwise along the microtubule wall with the beta-tubulin subunit facing the microtubule plus end conferring a structural polarity. Microtubules usually have 13 protofilaments but different protofilament numbers can be found in some organisms and specialized cells. The cofactor is Mg(2+).

The protein resides in the cytoplasm. Its subcellular location is the cytoskeleton. Its function is as follows. Tubulin is the major constituent of microtubules, a cylinder consisting of laterally associated linear protofilaments composed of alpha- and beta-tubulin heterodimers. Microtubules grow by the addition of GTP-tubulin dimers to the microtubule end, where a stabilizing cap forms. Below the cap, tubulin dimers are in GDP-bound state, owing to GTPase activity of alpha-tubulin. This chain is Tubulin beta-2 chain (TUBB2), found in Triticum aestivum (Wheat).